Consider the following 184-residue polypeptide: Large ribosomal subunit protein uL6 (184 aa).

The protein belongs to the universal ribosomal protein uL6 family. As to quaternary structure, part of the 50S ribosomal subunit.

Functionally, this protein binds to the 23S rRNA, and is important in its secondary structure. It is located near the subunit interface in the base of the L7/L12 stalk, and near the tRNA binding site of the peptidyltransferase center. The chain is Large ribosomal subunit protein uL6 from Thermococcus kodakarensis (strain ATCC BAA-918 / JCM 12380 / KOD1) (Pyrococcus kodakaraensis (strain KOD1)).